We begin with the raw amino-acid sequence, 719 residues long: MQEPAITPDLIASHGLSPDEYDRILNIVGRTPTFTELGIFSAMWNEHCSYKSSKKWLRTLPTTGPQVICGPGENAGVVDIGDGQAVVFKMESHNHPSYIEPYQGAATGVGGILRDVFTMGARPIAAMNSLSFGEISHPKTRQLVNGVVAGVGGYGNCFGVPTVGGEVRFDPAYNGNCLVNAFAAGLADADKIFYSAASGVGMPVVYLGAKTGRDGVGGATMASAEFDDTIEEKRPTVQVGDPFTEKRLMEATLELMQTGAVISIQDMGAAGLTCSAVEMGDKGNLGVRLDLEKVPVREEAMTAYEMMLSESQERMLMVLRPELEQEAKAVFDKWDLDFAIVGETIAEDRFLIVHNGEVKADLPLKTLAGTAPEYDRPWVATPAADPLGDVPDVDPIDGLRALISSPNYASKDWVFTQYDTMVMADTVRIPGIGAGIVRVHGTDKALAFTSDVTPRYVQANPVEGGKQAVAEAYRNLSAVGATPLATTDNMNFGNPEKPEIMGQFVGAIKGISAAVAALDMPIVSGNVSLYNETDGTAILPTPTIGAVGLIAHLDDVIGCDVRDGHVALVLGETHGHLGQSAILSEVYNRAEGDAPPVDLDQEKAHGDFIRANRAYIKACTDLSDGGLALAAFEMAENAGVGVCLDASDTATLFGEDQGRYLIACNFDQAEALMIAASQAGLTLTSVGKFTGQAVRFGASSAPLAELSDVYRQSFGAALA.

Residue H47 is part of the active site. The ATP site is built by Y50 and K89. E91 provides a ligand contact to Mg(2+). Substrate contacts are provided by residues 92-95 and R114; that span reads SHNH. The active-site Proton acceptor is the H93. Residue D115 coordinates Mg(2+). Q238 is a binding site for substrate. D266 is a Mg(2+) binding site. Substrate is bound at residue 310 to 312; sequence ESQ. Residues D488 and G525 each coordinate ATP. Position 526 (N526) interacts with Mg(2+). Residue S528 participates in substrate binding.

The protein belongs to the FGAMS family. In terms of assembly, monomer. Part of the FGAM synthase complex composed of 1 PurL, 1 PurQ and 2 PurS subunits.

The protein localises to the cytoplasm. It carries out the reaction N(2)-formyl-N(1)-(5-phospho-beta-D-ribosyl)glycinamide + L-glutamine + ATP + H2O = 2-formamido-N(1)-(5-O-phospho-beta-D-ribosyl)acetamidine + L-glutamate + ADP + phosphate + H(+). Its pathway is purine metabolism; IMP biosynthesis via de novo pathway; 5-amino-1-(5-phospho-D-ribosyl)imidazole from N(2)-formyl-N(1)-(5-phospho-D-ribosyl)glycinamide: step 1/2. Functionally, part of the phosphoribosylformylglycinamidine synthase complex involved in the purines biosynthetic pathway. Catalyzes the ATP-dependent conversion of formylglycinamide ribonucleotide (FGAR) and glutamine to yield formylglycinamidine ribonucleotide (FGAM) and glutamate. The FGAM synthase complex is composed of three subunits. PurQ produces an ammonia molecule by converting glutamine to glutamate. PurL transfers the ammonia molecule to FGAR to form FGAM in an ATP-dependent manner. PurS interacts with PurQ and PurL and is thought to assist in the transfer of the ammonia molecule from PurQ to PurL. The protein is Phosphoribosylformylglycinamidine synthase subunit PurL of Roseobacter denitrificans (strain ATCC 33942 / OCh 114) (Erythrobacter sp. (strain OCh 114)).